The chain runs to 570 residues: Aspartyl aminopeptidase (570 aa).

A Zn(2+)-binding site is contributed by His86. His160 contributes to the substrate binding site. Zn(2+) is bound at residue Asp324. Position 379 (Glu379) interacts with substrate. Glu380 and Asp434 together coordinate Zn(2+). Substrate contacts are provided by Asp434, His437, Lys462, and Tyr469. His534 serves as a coordination point for Zn(2+).

Belongs to the peptidase M18 family. As to quaternary structure, homododecamer composed of homodimers and homotrimers that assemble into a tetrahedron shape to create a central tunnel containing the active sites. Homooctamer. The cofactor is Zn(2+).

Its subcellular location is the cytoplasm. The enzyme catalyses Release of an N-terminal aspartate or glutamate from a peptide, with a preference for aspartate.. Activated by Co(2+). Inhibited by high concentrations (&gt;1mM) of Zn(2+). Functionally, aminopeptidase which specifically catalyzes the removal of glutamic acid or aspartic acid residues from the N-terminus of peptides. May play a role in the final step of host hemoglobin catabolism, by cleaving hemoglobin-derived oligopeptides in the cytoplasm. This Plasmodium falciparum (isolate 3D7) protein is Aspartyl aminopeptidase.